The primary structure comprises 1493 residues: ABC transporter C family member 7 (1493 aa).

The next 10 membrane-spanning stretches (helical) occupy residues 21 to 41, 70 to 90, 102 to 122, 140 to 160, 165 to 185, 309 to 329, 343 to 360, 423 to 443, 448 to 468, and 535 to 555; these read FPMF…GSCV, VVIC…LSCF, LMIL…SFYI, VWWV…IALY, LVSV…LFLC, ILLS…APYL, YSNQ…AKLV, WYMH…LILY, LGSI…IPLA, and SVLW…CMLL. Residues 309–590 form the ABC transmembrane type-1 1 domain; sequence ILLSTLFAFV…LPDTISMIVQ (282 aa). Residues 624–847 enclose the ABC transporter 1 domain; it reads VEVSNGAFSW…GTDFMELVGA (224 aa). Residue 659–666 coordinates ATP; that stretch reads GTVGSGKS. The tract at residues 863–898 is disordered; it reads ASAQSTTSKESKVSNDEEKQEEDLPSPKGQLVQEEE. Phosphoserine is present on Ser-888. A run of 6 helical transmembrane segments spans residues 915–935, 959–979, 1038–1055, 1059–1081, 1153–1173, and 1177–1197; these read LAYG…FQVL, GSTL…CILV, FSNL…IGVM, AWQV…QYYI, LSTV…EGVI, and FAGL…TLIW. In terms of domain architecture, ABC transmembrane type-1 2 spans 922 to 1204; sequence VPIILVVQIL…LIWTLCDLEN (283 aa). The 235-residue stretch at 1241-1475 folds into the ABC transporter 2 domain; sequence ITICNLQVRY…KSSSFSKLVA (235 aa). Position 1275 to 1282 (1275 to 1282) interacts with ATP; it reads GRTGCGKS.

Belongs to the ABC transporter superfamily. ABCC family. Conjugate transporter (TC 3.A.1.208) subfamily. In terms of tissue distribution, ubiquitous.

The protein localises to the membrane. The enzyme catalyses ATP + H2O + xenobioticSide 1 = ADP + phosphate + xenobioticSide 2.. Pump for glutathione S-conjugates. The protein is ABC transporter C family member 7 (ABCC7) of Arabidopsis thaliana (Mouse-ear cress).